A 148-amino-acid polypeptide reads, in one-letter code: Single-stranded DNA-binding protein 2 (148 aa).

The SSB domain occupies 6–108 (MNHITVSGLV…IEAESFGHDL (103 aa)).

In terms of assembly, homotetramer.

The protein is Single-stranded DNA-binding protein 2 (ssb2) of Tropheryma whipplei (strain TW08/27) (Whipple's bacillus).